The chain runs to 725 residues: Methionine--tRNA ligase (725 aa).

The short motif at 27–37 (PYANGQIHIGH) is the 'HIGH' region element. Zn(2+) contacts are provided by Cys158, Cys161, Cys171, and Cys174. The 'KMSKS' region motif lies at 348–352 (KMSKS). Residue Lys351 coordinates ATP. The 107-residue stretch at 619–725 (DFAKIDLRIA…SGAKPGMRVK (107 aa)) folds into the tRNA-binding domain.

This sequence belongs to the class-I aminoacyl-tRNA synthetase family. MetG type 1 subfamily. As to quaternary structure, homodimer. It depends on Zn(2+) as a cofactor.

The protein localises to the cytoplasm. The catalysed reaction is tRNA(Met) + L-methionine + ATP = L-methionyl-tRNA(Met) + AMP + diphosphate. In terms of biological role, is required not only for elongation of protein synthesis but also for the initiation of all mRNA translation through initiator tRNA(fMet) aminoacylation. The sequence is that of Methionine--tRNA ligase from Burkholderia pseudomallei (strain 1710b).